Consider the following 183-residue polypeptide: Translation initiation factor IF-3 (183 aa).

Belongs to the IF-3 family. As to quaternary structure, monomer.

It localises to the cytoplasm. In terms of biological role, IF-3 binds to the 30S ribosomal subunit and shifts the equilibrium between 70S ribosomes and their 50S and 30S subunits in favor of the free subunits, thus enhancing the availability of 30S subunits on which protein synthesis initiation begins. The chain is Translation initiation factor IF-3 from Aliivibrio salmonicida (strain LFI1238) (Vibrio salmonicida (strain LFI1238)).